The primary structure comprises 129 residues: Small ribosomal subunit protein uS9 (129 aa).

This sequence belongs to the universal ribosomal protein uS9 family.

The sequence is that of Small ribosomal subunit protein uS9 from Chlorobium phaeobacteroides (strain DSM 266 / SMG 266 / 2430).